The sequence spans 232 residues: tRNA (guanine-N(1)-)-methyltransferase (232 aa).

Residues Gly108 and 128 to 133 (IGDFIM) each bind S-adenosyl-L-methionine.

It belongs to the RNA methyltransferase TrmD family. Homodimer.

It is found in the cytoplasm. The enzyme catalyses guanosine(37) in tRNA + S-adenosyl-L-methionine = N(1)-methylguanosine(37) in tRNA + S-adenosyl-L-homocysteine + H(+). In terms of biological role, specifically methylates guanosine-37 in various tRNAs. The polypeptide is tRNA (guanine-N(1)-)-methyltransferase (Campylobacter fetus subsp. fetus (strain 82-40)).